We begin with the raw amino-acid sequence, 710 residues long: uncharacterized protein (710 aa).

Residues 1 to 20 (MKQRQARLIGTPSQTRRQQE) form a disordered region. Residues 13–42 (SQTRRQQELAEKLEKVKEVLEDEKKRQFNE) adopt a coiled-coil conformation.

Belongs to the IIV-6 268L family.

This is an uncharacterized protein from Invertebrate iridescent virus 6 (IIV-6).